The sequence spans 523 residues: Factor arrest protein 8 (523 aa).

Positions 26–76 (TKNERDRITWELERSEMKARIAELEGENRDLKHQLNQIQSKAVSPEGEKEE) form a coiled coil. The disordered stretch occupies residues 61 to 80 (NQIQSKAVSPEGEKEEKHVP). The span at 71 to 80 (EGEKEEKHVP) shows a compositional bias: basic and acidic residues. A Phosphoserine modification is found at serine 115. Residue threonine 132 is modified to Phosphothreonine. A disordered region spans residues 150–171 (ALLDTKPNPKQGPSESPSPTKV). Residues 160–171 (QGPSESPSPTKV) are compositionally biased toward polar residues.

In terms of assembly, component of a complex at least composed of FAR3, FAR7, FAR8, FAR10, FAR11 and VPS64.

The protein resides in the cytoplasm. Its subcellular location is the endoplasmic reticulum. In terms of biological role, participates in the control of the reentry into the cell cycle following pheromone treatment. The sequence is that of Factor arrest protein 8 (FAR8) from Saccharomyces cerevisiae (strain ATCC 204508 / S288c) (Baker's yeast).